We begin with the raw amino-acid sequence, 338 residues long: NLP effector protein 6 (338 aa).

Positions 1–19 (MRFTTIFWISLTVLATVRA) are cleaved as a signal peptide. The segment at 68–119 (LTLSPSASSPAKRNVTLPPDTTMRPDPRQTEPPTEAPTPASTPAPTPDPGPW) is disordered. An N-linked (GlcNAc...) asparagine glycan is attached at Asn-81. Pro residues predominate over residues 101 to 117 (TEAPTPASTPAPTPDPG). Residues 205–215 (AIMYSWYFPKD) carry the Conserved undecapeptide motif I motif. Residues 222-227 (GHRHDW) carry the Hepta-peptide GHRHDWE motif II motif.

This sequence belongs to the Necrosis inducing protein (NPP1) family.

The protein localises to the secreted. Its function is as follows. Secreted effector that contributes strongly to virulence during infection by P.capsici. Causes large necrotic areas in both host C.annuum and non-host N.benthamiana. The sequence is that of NLP effector protein 6 from Phytophthora capsici.